Consider the following 209-residue polypeptide: Type III pantothenate kinase (209 aa).

5-12 (DIGNSNAN) lines the ATP pocket. Substrate is bound by residues Tyr-68 and 72-75 (GIDR). The Proton acceptor role is filled by Asp-74. Asp-89 contacts K(+). Ser-92 lines the ATP pocket. Thr-144 contacts substrate.

Belongs to the type III pantothenate kinase family. In terms of assembly, homodimer. It depends on NH4(+) as a cofactor. K(+) serves as cofactor.

It is found in the cytoplasm. It catalyses the reaction (R)-pantothenate + ATP = (R)-4'-phosphopantothenate + ADP + H(+). It participates in cofactor biosynthesis; coenzyme A biosynthesis; CoA from (R)-pantothenate: step 1/5. In terms of biological role, catalyzes the phosphorylation of pantothenate (Pan), the first step in CoA biosynthesis. The polypeptide is Type III pantothenate kinase (Campylobacter jejuni subsp. jejuni serotype O:2 (strain ATCC 700819 / NCTC 11168)).